Consider the following 68-residue polypeptide: Large ribosomal subunit protein bL31 (68 aa).

The Zn(2+) site is built by Cys17, Cys19, Cys37, and Cys40.

The protein belongs to the bacterial ribosomal protein bL31 family. Type A subfamily. In terms of assembly, part of the 50S ribosomal subunit. Zn(2+) serves as cofactor.

Its function is as follows. Binds the 23S rRNA. The chain is Large ribosomal subunit protein bL31 from Dehalococcoides mccartyi (strain CBDB1).